The following is a 126-amino-acid chain: Small ribosomal subunit protein uS12 (126 aa).

At Asp89 the chain carries 3-methylthioaspartic acid. The segment at 106 to 126 (GVRERRRSRSKYGAKMPRSAA) is disordered.

This sequence belongs to the universal ribosomal protein uS12 family. As to quaternary structure, part of the 30S ribosomal subunit. Contacts proteins S8 and S17. May interact with IF1 in the 30S initiation complex.

In terms of biological role, with S4 and S5 plays an important role in translational accuracy. Functionally, interacts with and stabilizes bases of the 16S rRNA that are involved in tRNA selection in the A site and with the mRNA backbone. Located at the interface of the 30S and 50S subunits, it traverses the body of the 30S subunit contacting proteins on the other side and probably holding the rRNA structure together. The combined cluster of proteins S8, S12 and S17 appears to hold together the shoulder and platform of the 30S subunit. In Tremblaya princeps, this protein is Small ribosomal subunit protein uS12.